The primary structure comprises 372 residues: Heat-inducible transcription repressor HrcA (372 aa).

The segment at 296–331 (VSSGYGRSGEAGEPAGNDPVGEPETESETESQTNDM) is disordered.

The protein belongs to the HrcA family.

Its function is as follows. Negative regulator of class I heat shock genes (grpE-dnaK-dnaJ and groELS operons). Prevents heat-shock induction of these operons. This Bifidobacterium longum subsp. infantis (strain ATCC 15697 / DSM 20088 / JCM 1222 / NCTC 11817 / S12) protein is Heat-inducible transcription repressor HrcA.